The primary structure comprises 922 residues: GPI inositol-deacylase (922 aa).

The Cytoplasmic segment spans residues 1–11 (MFLHSVNLWNL). The helical transmembrane segment at 12–32 (AFYVFMVFLATLGLWDVFFGF) threads the bilayer. At 33-597 (EENKCSMSYM…GQVVRFHGGA (565 aa)) the chain is on the lumenal side. Ser174 is a catalytic residue. 3 N-linked (GlcNAc...) asparagine glycosylation sites follow: Asn363, Asn402, and Asn558. The helical transmembrane segment at 598-618 (LPAYVVSSILLAYGGQLYSLL) threads the bilayer. Residues 619-641 (STGYCLEYSTILDKEAKPYKVDP) are Cytoplasmic-facing. Residues 642–662 (FVIMIKFLLGYKWFKELWDAV) form a helical membrane-spanning segment. The Lumenal portion of the chain corresponds to 663–668 (LLPELD). A helical membrane pass occupies residues 669–689 (AIVLTSQSMCFPLVSLILFLF). Topologically, residues 690–694 (GTCTA) are cytoplasmic. The helical transmembrane segment at 695-715 (YWSGLLSSTSVQLLSSLWLAL) threads the bilayer. The Lumenal portion of the chain corresponds to 716–733 (KRPAELPKDIKVMSPDLP). Residues 734–754 (VLTVVFLIVSWTTCGALAILL) form a helical membrane-spanning segment. At 755 to 817 (SYLYYVFKVV…DAEDSLRMHS (63 aa)) the chain is on the cytoplasmic side. The segment at 776–798 (NQPVNPKHSRRSEKKSNHHKDSA) is disordered. A compositionally biased stretch (basic residues) spans 782–793 (KHSRRSEKKSNH). The helical transmembrane segment at 818–838 (TVINLLTWVVLLSMPSLIYWL) threads the bilayer. Over 839 to 894 (KNLRYYFKLSPDPCKPLAFLLIPAIAILGNTHTVSVKSSKLLKTVSQFPLPLAVGV) the chain is Lumenal. Residues 895-915 (IAFGSSHLYRVPCFVIIPLVF) traverse the membrane as a helical segment. At 916 to 922 (HALCNFM) the chain is on the cytoplasmic side.

The protein belongs to the GPI inositol-deacylase family.

It localises to the endoplasmic reticulum membrane. GPI inositol-deacylase that catalyzes the remove of the acyl chain linked to the 2-OH position of inositol ring from the GPI-anchored protein (GPI-AP) in the endoplasmic reticulum. Initiates the post-attachment remodeling phase of GPI-AP biogenesis and participates in endoplasmic reticulum (ER)-to-Golgi transport of GPI-anchored protein. The chain is GPI inositol-deacylase from Mus musculus (Mouse).